A 432-amino-acid polypeptide reads, in one-letter code: Adenosylhomocysteinase (432 aa).

Residues T56, D131, and E156 each contribute to the substrate site. Residue 157–159 (TTT) participates in NAD(+) binding. Substrate is bound by residues K186 and D190. NAD(+) contacts are provided by residues 222–227 (GDVGKG), E243, N248, 299–301 (IGH), N346, H353, K426, 426–430 (KPDHY), and Y430.

The protein belongs to the adenosylhomocysteinase family. As to quaternary structure, interacts with AhcyL1; the interaction may negatively regulate Ahcy catalytic activity. Requires NAD(+) as cofactor.

It catalyses the reaction S-adenosyl-L-homocysteine + H2O = L-homocysteine + adenosine. The protein operates within amino-acid biosynthesis; L-homocysteine biosynthesis; L-homocysteine from S-adenosyl-L-homocysteine: step 1/1. Its function is as follows. Adenosylhomocysteine is a competitive inhibitor of S-adenosyl-L-methionine-dependent methyl transferase reactions; therefore adenosylhomocysteinase may play a key role in the control of methylations via regulation of the intracellular concentration of adenosylhomocysteine. This is Adenosylhomocysteinase from Drosophila melanogaster (Fruit fly).